The sequence spans 180 residues: Large ribosomal subunit protein eL18 (180 aa).

Positions 152-180 are disordered; sequence FGPAPGVPGSHTKPYVISKSRERTNAHRA. The segment covering 170-180 has biased composition (basic and acidic residues); sequence KSRERTNAHRA.

It belongs to the eukaryotic ribosomal protein eL18 family.

It is found in the cytoplasm. This is Large ribosomal subunit protein eL18 (RPL18) from Taenia asiatica (Asian tapeworm).